We begin with the raw amino-acid sequence, 896 residues long: Protein argonaute 9 (896 aa).

Residues 267 to 380 form the PAZ domain; that stretch reads PVVDFLLANQ…FPIEFCNLVS (114 aa). In terms of domain architecture, Piwi spans 550–857; sequence FLLCILAERK…AAAQMGTVMK (308 aa).

This sequence belongs to the argonaute family. Ago subfamily. As to expression, expressed in embryonic shoot apex region, pollen and developing ovules.

Involved in RNA-mediated post-transcriptional gene silencing (PTGS). Main component of the RNA-induced silencing complex (RISC) that binds to a short guide RNA such as a microRNA (miRNA) or small interfering RNA (siRNA). RISC uses the mature miRNA or siRNA as a guide for slicer-directed cleavage of homologous mRNAs to repress gene expression. Associates preferentially with small RNAs of 24 nucleotide in length with a 5' terminal adenosine. Interacts with 24 nucleotide sRNAs derived from transposable elements (TEs). Required to silence pericentrometric-located TEs in female gametes and their accessory cells. Necessary to inactivate a significant proportion of long terminal repeat retrotransposons (LTRs) in the ovule. Required to specify cell fate in ovule. Involved in the control of female gamete formation by restricting the specification of gametophyte precursors in a dosage-dependent, non-cell-autonomous manner. Targeted by turnip yellows virus (TuYV) protein P0 (via F-box-like domain) for probable proteasome degradation and thereby inactivating AGO9 function in RNA silencing. This chain is Protein argonaute 9 (AGO9), found in Arabidopsis thaliana (Mouse-ear cress).